The primary structure comprises 335 residues: Tryptophan--tRNA ligase (335 aa).

ATP contacts are provided by residues 11 to 13 and 19 to 20; these read QPT and GN. Residues 12-20 carry the 'HIGH' region motif; the sequence is PTGNLHLGN. Aspartate 135 contacts L-tryptophan. ATP is bound by residues 147-149, valine 189, and 198-202; these read GED and KMSKS. Positions 198–202 match the 'KMSKS' region motif; it reads KMSKS.

The protein belongs to the class-I aminoacyl-tRNA synthetase family. As to quaternary structure, homodimer.

It is found in the cytoplasm. The enzyme catalyses tRNA(Trp) + L-tryptophan + ATP = L-tryptophyl-tRNA(Trp) + AMP + diphosphate + H(+). Catalyzes the attachment of tryptophan to tRNA(Trp). This chain is Tryptophan--tRNA ligase, found in Nostoc sp. (strain PCC 7120 / SAG 25.82 / UTEX 2576).